A 539-amino-acid chain; its full sequence is Glutamyl-tRNA(Gln) amidotransferase subunit B, mitochondrial (539 aa).

This sequence belongs to the GatB/GatE family. GatB subfamily. As to quaternary structure, subunit of the heterotrimeric GatFAB amidotransferase (AdT) complex, composed of A, B and F subunits.

It localises to the mitochondrion. It catalyses the reaction L-glutamyl-tRNA(Gln) + L-glutamine + ATP + H2O = L-glutaminyl-tRNA(Gln) + L-glutamate + ADP + phosphate + H(+). In terms of biological role, allows the formation of correctly charged Gln-tRNA(Gln) through the transamidation of misacylated Glu-tRNA(Gln) in the mitochondria. The reaction takes place in the presence of glutamine and ATP through an activated gamma-phospho-Glu-tRNA(Gln). The protein is Glutamyl-tRNA(Gln) amidotransferase subunit B, mitochondrial of Kluyveromyces lactis (strain ATCC 8585 / CBS 2359 / DSM 70799 / NBRC 1267 / NRRL Y-1140 / WM37) (Yeast).